A 1186-amino-acid chain; its full sequence is Myelin transcription factor 1-like protein (1186 aa).

The tract at residues 1–21 is disordered; the sequence is MEVDTEEKRHRTRSKGVRVPV. A CCHHC-type 1 zinc finger spans residues 22 to 65; it reads EPAIQELFSCPTPGCDGSGHVSGKYARHRSVYGCPLAKKRKTQD. Zn(2+) is bound by residues Cys-31, Cys-36, His-49, and Cys-55. 2 disordered regions span residues 56–175 and 220–247; these read PLAK…QMNC and RTES…GRKS. The span at 86–169 shows a compositional bias: acidic residues; that stretch reads SVDECDDSDG…EEEEEEEENE (84 aa). Residue Ser-250 is modified to Phosphoserine. 2 disordered regions span residues 342 to 372 and 449 to 513; these read SETN…GRTP and REKM…GCDG. A compositionally biased stretch (polar residues) spans 343 to 357; it reads ETNPQERNPQQNMNI. 3 stretches are compositionally biased toward basic and acidic residues: residues 361 to 372, 449 to 487, and 495 to 505; these read VRPEEDFPGRTP, REKM…DSHV, and DPSRTEKKESK. 2 consecutive CCHHC-type zinc fingers follow at residues 497 to 540 and 541 to 584; these read SRTE…PPEI and LAMH…KLAK. The Zn(2+) site is built by Cys-506, Cys-511, His-524, Cys-530, Cys-550, Cys-555, His-568, and Cys-574. Disordered stretches follow at residues 659–709 and 753–780; these read RAIA…GGGS and KPQD…MNKQ. A compositionally biased stretch (basic and acidic residues) spans 666–683; the sequence is QTRDISPKGYDDAKRYCK. A compositionally biased stretch (low complexity) spans 685–709; sequence PSPSSSSTSSYAPSSSSNLSCGGGS. CCHHC-type zinc fingers lie at residues 896 to 939, 945 to 988, and 998 to 1041; these read LATS…GIRI, DKED…QKDG, and KSVK…MKKA. Zn(2+)-binding residues include Cys-905, Cys-910, His-923, Cys-929, Cys-954, Cys-959, His-972, Cys-978, Cys-1007, Cys-1012, His-1025, and Cys-1031. Residues 1056–1130 are a coiled coil; that stretch reads SNGIENDEEI…LANLSQSLIH (75 aa).

The protein belongs to the MYT1 family. In terms of assembly, interacts with SIN3B.

It localises to the nucleus. It is found in the chromosome. Transcription factor that plays a key role in neuronal differentiation by specifically repressing expression of non-neuronal genes during neuron differentiation. In contrast to other transcription repressors that inhibit specific lineages, mediates repression of multiple differentiation programs. Also represses expression of negative regulators of neurogenesis, such as members of the Notch signaling pathway, including HES1. The combination of three transcription factors, ASCL1, POU3F2/BRN2 and MYT1L, is sufficient to reprogram fibroblasts and other somatic cells into induced neuronal (iN) cells in vitro. Directly binds the 5'-AAGTT-3' core motif present on the promoter of target genes and represses transcription by recruiting a multiprotein complex containing SIN3B. The 5'-AAGTT-3' core motif is absent from the promoter of neural genes. The sequence is that of Myelin transcription factor 1-like protein from Homo sapiens (Human).